A 266-amino-acid polypeptide reads, in one-letter code: Tryptophan synthase alpha chain (266 aa).

Catalysis depends on proton acceptor residues Glu49 and Asp60.

It belongs to the TrpA family. Tetramer of two alpha and two beta chains.

The catalysed reaction is (1S,2R)-1-C-(indol-3-yl)glycerol 3-phosphate + L-serine = D-glyceraldehyde 3-phosphate + L-tryptophan + H2O. It functions in the pathway amino-acid biosynthesis; L-tryptophan biosynthesis; L-tryptophan from chorismate: step 5/5. In terms of biological role, the alpha subunit is responsible for the aldol cleavage of indoleglycerol phosphate to indole and glyceraldehyde 3-phosphate. This is Tryptophan synthase alpha chain from Trichormus variabilis (strain ATCC 29413 / PCC 7937) (Anabaena variabilis).